Consider the following 673-residue polypeptide: Leucine zipper putative tumor suppressor 3 (673 aa).

Disordered stretches follow at residues 1-157, 172-239, and 251-317; these read MAKL…CSEP, FHSM…QHLA, and IGTA…PPSP. Residues 79-92 show a composition bias toward basic and acidic residues; the sequence is SRERPGRYPSEDKG. Polar residues predominate over residues 173-186; the sequence is HSMQNLCPPQTNGT. A compositionally biased stretch (low complexity) spans 215–235; that stretch reads GLSDSGRNSLTSLPTYSSSYS. A compositionally biased stretch (gly residues) spans 258–269; the sequence is SGSGGSSGGGSG. Over residues 274–294 the composition is skewed to low complexity; that stretch reads GTSDSGRASSKSGSSSSMGRP. Residues 295–307 are compositionally biased toward gly residues; sequence GHLGSGEGGGGGL. A phosphoserine mark is found at S316 and S318. Coiled coils occupy residues 317 to 496 and 571 to 639; these read PSAL…SLRD and RALR…RLRE. The disordered stretch occupies residues 635–673; that stretch reads RRLRERGAAGGASTPTPQHGEEKKAWTPSRLERIESTEI. A compositionally biased stretch (basic and acidic residues) spans 653-673; that stretch reads HGEEKKAWTPSRLERIESTEI.

It belongs to the LZTS3 family. As to quaternary structure, interacts (via C-terminus) with SHANK3 (via PDZ domain). Interacts (via coiled coil) with SIPA1L1. Can form homooligomers.

It localises to the synapse. Its subcellular location is the postsynaptic density. It is found in the cell projection. The protein resides in the dendritic spine. The protein localises to the dendrite. It localises to the cytoplasm. Its subcellular location is the cytoskeleton. Functionally, may be involved in promoting the maturation of dendritic spines, probably via regulating SIPA1L1 levels at the postsynaptic density of synapses. The polypeptide is Leucine zipper putative tumor suppressor 3 (Homo sapiens (Human)).